We begin with the raw amino-acid sequence, 522 residues long: Glucose-1-phosphate adenylyltransferase large subunit, chloroplastic/amyloplastic (522 aa).

The transit peptide at 1–62 (MSSMQFSSVL…RGPAATGAQC (62 aa)) directs the protein to the chloroplast. Basic and acidic residues predominate over residues 28–42 (SERLKVGDSSSIRHE). The tract at residues 28–54 (SERLKVGDSSSIRHERASRRMCNGGRG) is disordered.

It belongs to the bacterial/plant glucose-1-phosphate adenylyltransferase family. As to quaternary structure, heterotetramer. Abundantly expressed in the whole grains, a slightly less abundant expression is seen in leaves, while a low level expression is seen in the roots. A greater expression is seen in the endosperm than in the embryo and pericarp layers.

The protein localises to the plastid. It is found in the chloroplast. The protein resides in the amyloplast. It carries out the reaction alpha-D-glucose 1-phosphate + ATP + H(+) = ADP-alpha-D-glucose + diphosphate. It functions in the pathway glycan biosynthesis; starch biosynthesis. Its activity is regulated as follows. Insensitive to 3'phosphoglycerate and orthophosphate. This protein plays a role in synthesis of starch. It catalyzes the synthesis of the activated glycosyl donor, ADP-glucose from Glc-1-P and ATP. This is Glucose-1-phosphate adenylyltransferase large subunit, chloroplastic/amyloplastic (AGP-L) from Triticum aestivum (Wheat).